We begin with the raw amino-acid sequence, 269 residues long: HTH-type transcriptional activator ArnR (269 aa).

Residues Met1–Leu218 are Cytoplasmic-facing. A DNA-binding region (H-T-H motif) is located at residues Thr39–Asp62. Residues Glu219 to Phe239 form a helical membrane-spanning segment. Topologically, residues Arg240–Gln242 are extracellular. The helical transmembrane segment at Leu243 to Phe263 threads the bilayer. Over Ala264–Arg269 the chain is Cytoplasmic.

It is found in the cell membrane. Its function is as follows. Involved in regulation of archaellar gene expression. Activates flaB transcription upon nutrient starvation by acting on the flaB promoter. This Sulfolobus acidocaldarius (strain ATCC 33909 / DSM 639 / JCM 8929 / NBRC 15157 / NCIMB 11770) protein is HTH-type transcriptional activator ArnR.